We begin with the raw amino-acid sequence, 296 residues long: Arginase (296 aa).

Residues histidine 98, aspartate 124, histidine 126, and aspartate 128 each contribute to the Mn(2+) site. Positions 130, 137, and 178 each coordinate L-arginine. Residues aspartate 225 and aspartate 227 each contribute to the Mn(2+) site. 2 residues coordinate L-arginine: aspartate 227 and threonine 239.

This sequence belongs to the arginase family. In terms of assembly, monomer. Homodimer; dimerization is dispensable for catalytic activity. Requires Mn(2+) as cofactor.

It catalyses the reaction L-arginine + H2O = urea + L-ornithine. It participates in nitrogen metabolism; urea cycle; L-ornithine and urea from L-arginine: step 1/1. Its activity is regulated as follows. Substitution of the loosely bound surface exposed Mn(2+) with Mg(2+), Zn(2+), Ni(2+) or Co(2+) results in similar catalytic activity, substitution with Cd(2+) and Cu(2+) reduces catalytic activity and substitution with Hg(2+) and Ca(2+) inhibits the enzyme. Inhibited by L-norvaline. Functionally, catalyzes the hydrolysis of L-arginine into urea and L-ornithine, which is a precursor for polyamine biosynthesis. By depleting host L-arginine, a substrate for nitric oxide synthase (NOS), prevents the production of nitric oxide (NO) by host activated macrophages, and thus allows the parasite to evade host immune response. This Entamoeba histolytica (strain ATCC 30459 / HM-1:IMSS / ABRM) protein is Arginase.